We begin with the raw amino-acid sequence, 228 residues long: Core-capsid bridging protein (228 aa).

Residues 146 to 177 are disordered; the sequence is ARPPAARISPPRRRRRRRRSPRPRATAAYRSS. Positions 155 to 167 are enriched in basic residues; the sequence is PPRRRRRRRRSPR. Residues 168-177 show a composition bias toward low complexity; sequence PRATAAYRSS.

It belongs to the adenoviridae core-capsid bridging protein family. Monomer. Homodimer. Exists in equilibrium between monomers and dimers in solution. Interacts with the histone-like nucleoprotein; this interactions bridge the virus core to the capsid. Interacts with core protein X; this interactions bridge the virus core to the capsid. Interacts with the endosome lysis protein VI; this interactions bridge the virus core to the capsid. Interacts with the peripentonal hexons. Interacts with host NPM1; this interaction might play a role in virus assembly.

It is found in the virion. Its subcellular location is the host nucleus. It localises to the host nucleolus. Functionally, associates loosely with the viral DNA to form an outer shell around the nucleoprotein-DNA complex and links it with the capsid by binding the endosome lysis protein. Dissociates from the viral genome during entry. Might be involved in nuclear capsid assembly of the viral particles through its association with NPM1/nucleophosmin. This chain is Core-capsid bridging protein, found in Murine adenovirus A serotype 1 (MAdV-1).